A 419-amino-acid chain; its full sequence is 1,4-beta-D-glucan cellobiohydrolase CEL6B (419 aa).

A signal peptide spans 1 to 47 (MGESFLLLQPASPALSPTPSSLLLGPTITMRADVLIAALATGALVAA). Substrate-binding residues include tryptophan 111 and serine 113. Active-site proton donor residues include aspartate 152 and aspartate 199. A substrate-binding site is contributed by tryptophan 247. Residue asparagine 284 is glycosylated (N-linked (GlcNAc...) asparagine). Asparagine 287 provides a ligand contact to substrate. N-linked (GlcNAc...) asparagine glycosylation is present at asparagine 298. Tryptophan 347 lines the substrate pocket. An N-linked (GlcNAc...) asparagine glycan is attached at asparagine 364. Residues lysine 375 and glutamate 379 each coordinate substrate.

The protein belongs to the glycosyl hydrolase 6 (cellulase B) family. In terms of processing, both N- and O-glycosylated.

The protein localises to the secreted. It carries out the reaction Hydrolysis of (1-&gt;4)-beta-D-glucosidic linkages in cellulose and cellotetraose, releasing cellobiose from the non-reducing ends of the chains.. Its function is as follows. Exoglucanase that plays an important function in biomass degradation by catalyzing the hydrolysis of the non-reducing end beta-1,4-glucosidic linkages in cellulose and cellotetraose to release cellobiose. Hydrolyzes crystalline and amorphous cellulose but is inactive on hydroxyethyl cellulose, mannan, galactomannan, xyloglucan, arabinoxylan, arabinan, xylan, and pectin. In Podospora anserina (strain S / ATCC MYA-4624 / DSM 980 / FGSC 10383) (Pleurage anserina), this protein is 1,4-beta-D-glucan cellobiohydrolase CEL6B.